The primary structure comprises 303 residues: MSSARFDSSDRSAWYMGPVSRQEAQTRLQGQRHGMFLVRDSSTCPGDYVLSVSENSRVSHYIINSLPNRRFKIGDQEFDHLPALLEFYKIHYLDTTTLIEPAPRYPSPPMGSVSAPNLPTAEDNLEYVRTLYDFPGNDAEDLPFKKGEILVIIEKPEEQWWSARNKDGRVGMIPVPYVEKLVRSSPHGKHGNRNSNSYGIPEPAHAYAQPQTTTPLPAVSGSPGAAITPLPSTQNGPVFAKAIQKRVPCAYDKTALALEVGDIVKVTRMNINGQWEGEVNGRKGLFPFTHVKIFDPQNPDENE.

The SH2 domain maps to 14 to 102 (WYMGPVSRQE…LDTTTLIEPA (89 aa)). One can recognise an SH3 1 domain in the interval 123-183 (DNLEYVRTLY…PVPYVEKLVR (61 aa)). A phosphotyrosine mark is found at Tyr-127 and Tyr-207. The disordered stretch occupies residues 184–234 (SSPHGKHGNRNSNSYGIPEPAHAYAQPQTTTPLPAVSGSPGAAITPLPSTQ). An SH3 2 domain is found at 235–296 (NGPVFAKAIQ…PFTHVKIFDP (62 aa)).

Belongs to the CRK family. In terms of assembly, interacts with tyrosine-phosphorylated EPOR and INPP5D/SHIP1. Interacts with DOCK2 and DOCK5 via its first SH3 domain. Interacts with phosphorylated CBLB and IRS4. Interacts with BCAR1/CAS and NEDD9/HEF1.

Its function is as follows. May mediate the transduction of intracellular signals. This chain is Crk-like protein (CRKL), found in Homo sapiens (Human).